Here is a 275-residue protein sequence, read N- to C-terminus: NH(3)-dependent NAD(+) synthetase (275 aa).

Residue 46–53 (GISGGQDS) participates in ATP binding. Aspartate 52 contacts Mg(2+). Arginine 140 contributes to the deamido-NAD(+) binding site. Threonine 160 lines the ATP pocket. Glutamate 165 contacts Mg(2+). 2 residues coordinate deamido-NAD(+): lysine 173 and aspartate 180. Residues lysine 189 and threonine 211 each contribute to the ATP site. 260–261 (HK) lines the deamido-NAD(+) pocket.

It belongs to the NAD synthetase family. As to quaternary structure, homodimer.

The enzyme catalyses deamido-NAD(+) + NH4(+) + ATP = AMP + diphosphate + NAD(+) + H(+). It participates in cofactor biosynthesis; NAD(+) biosynthesis; NAD(+) from deamido-NAD(+) (ammonia route): step 1/1. Catalyzes the ATP-dependent amidation of deamido-NAD to form NAD. Uses ammonia as a nitrogen source. The sequence is that of NH(3)-dependent NAD(+) synthetase from Shigella dysenteriae serotype 1 (strain Sd197).